A 246-amino-acid polypeptide reads, in one-letter code: Myelin protein P0 (246 aa).

Positions 1–27 are cleaved as a signal peptide; the sequence is MFRDLKPAYLFCCSVLYAFSVLRPSQG. In terms of domain architecture, Ig-like V-type spans 28–143; that stretch reads ISVSTHHNLH…VGTSSDVHLT (116 aa). Residues 28–150 are Extracellular-facing; it reads ISVSTHHNLH…HLTVYDKIPP (123 aa). Cysteine 48 and cysteine 125 are joined by a disulfide. An N-linked (GlcNAc...) (complex) asparagine glycan is attached at asparagine 120. The helical transmembrane segment at 151 to 178 threads the bilayer; it reads VGAGVVSGAIIGTFLGIILLIVGGLYLF. Residues 179 to 246 are Cytoplasmic-facing; the sequence is RYIVRRRARS…KLSESKRDKK (68 aa). The disordered stretch occupies residues 200 to 246; it reads AERGKVSGKAGTVSKGPVLYATLDQSKSGKGASEKKSKLSESKRDKK. The span at 231 to 246 shows a compositional bias: basic and acidic residues; it reads ASEKKSKLSESKRDKK.

It belongs to the myelin P0 protein family. In terms of processing, N-glycan is sulfated. Found only in peripheral nervous system Schwann cells.

Its subcellular location is the cell membrane. In terms of biological role, creation of an extracellular membrane face which guides the wrapping process and ultimately compacts adjacent lamellae. This is Myelin protein P0 (mpz) from Heterodontus francisci (Horn shark).